The following is a 352-amino-acid chain: Ion-translocating oxidoreductase complex subunit D (352 aa).

Helical transmembrane passes span isoleucine 20–glycine 40, glycine 42–leucine 62, valine 69–proline 91, and proline 123–leucine 143. Position 187 is an FMN phosphoryl threonine (threonine 187). The next 5 helical transmembrane spans lie at leucine 215–leucine 235, tryptophan 242–phenylalanine 262, leucine 267–leucine 287, leucine 301–proline 321, and aspartate 322–threonine 342.

The protein belongs to the NqrB/RnfD family. In terms of assembly, the complex is composed of six subunits: RsxA, RsxB, RsxC, RsxD, RsxE and RsxG. It depends on FMN as a cofactor.

Its subcellular location is the cell inner membrane. Its function is as follows. Part of a membrane-bound complex that couples electron transfer with translocation of ions across the membrane. Required to maintain the reduced state of SoxR. The polypeptide is Ion-translocating oxidoreductase complex subunit D (Salmonella typhi).